The primary structure comprises 315 residues: Gamma-hemolysin component C (315 aa).

The signal sequence occupies residues 1 to 29; sequence MLKNKILATTLSVSLLAPLANPLLENAKA.

Belongs to the aerolysin family. Toxicity requires sequential binding and synergistic association of a class S and a class F component which form heterooligomeric complexes. HlgC (class S) associates with HlgB (class F) thus forming an CB toxin.

In terms of biological role, toxin that seems to act by forming pores in the membrane of the cell. Has a hemolytic and a leucotoxic activity. This is Gamma-hemolysin component C (hlgC) from Staphylococcus aureus (strain MSSA476).